A 319-amino-acid chain; its full sequence is MASLGAAAEPERNLFGKDEAEAYESPEGRRSGRKKRTKIVPVWENKPCGSSRSLVRRIGSHLPLKPCTRACFEALPSASNLYFTDTPMVPTLADIKWIAADDDETYARVRSDTRPLKHKWRPSPLLVMQRNSSVPNLKMKEEKMFCLKKPGLSLNRSSDIQEELSILRSQIARIVAGDSVSSCLGSDSIPVNVDLEASLPDYGPSYQSTTSFVISDITEEDELDVSEYSSASLVDSTISLQRQIETNMSDDDEDSMCLSKSNSFADMMGILKDIHKMKLNRDWSNRNQCLHKEEDPVNLISEVLRQKFALCDPDNVNNE.

The tract at residues 1–37 is disordered; that stretch reads MASLGAAAEPERNLFGKDEAEAYESPEGRRSGRKKRT. Positions 9-30 are enriched in basic and acidic residues; sequence EPERNLFGKDEAEAYESPEGRR.

This sequence belongs to the MTFR1 family.

It localises to the mitochondrion outer membrane. Mitochondrial protein required for adaptation of miochondrial dynamics to metabolic changes. Regulates mitochondrial morphology at steady state and mediates AMPK-dependent stress-induced mitochondrial fragmentation via the control of OPA1 levels. This is Mitochondrial fission regulator 1-like-A (mtfr1l-a) from Xenopus laevis (African clawed frog).